Consider the following 461-residue polypeptide: L-seryl-tRNA(Sec) selenium transferase (461 aa).

Lys-294 carries the post-translational modification N6-(pyridoxal phosphate)lysine.

The protein belongs to the SelA family. Requires pyridoxal 5'-phosphate as cofactor.

The protein localises to the cytoplasm. It carries out the reaction L-seryl-tRNA(Sec) + selenophosphate + H(+) = L-selenocysteinyl-tRNA(Sec) + phosphate. Its pathway is aminoacyl-tRNA biosynthesis; selenocysteinyl-tRNA(Sec) biosynthesis; selenocysteinyl-tRNA(Sec) from L-seryl-tRNA(Sec) (bacterial route): step 1/1. Its function is as follows. Converts seryl-tRNA(Sec) to selenocysteinyl-tRNA(Sec) required for selenoprotein biosynthesis. The sequence is that of L-seryl-tRNA(Sec) selenium transferase from Haemophilus influenzae (strain PittEE).